Consider the following 53-residue polypeptide: Sec-independent protein translocase protein TatA (53 aa).

Residues 1-21 (MGMSFSHLLIVLLIIFVLFGA) traverse the membrane as a helical segment.

The protein belongs to the TatA/E family. As to quaternary structure, the Tat system comprises two distinct complexes: a TatABC complex, containing multiple copies of TatA, TatB and TatC subunits, and a separate TatA complex, containing only TatA subunits. Substrates initially bind to the TatABC complex, which probably triggers association of the separate TatA complex to form the active translocon.

The protein resides in the cell inner membrane. Functionally, part of the twin-arginine translocation (Tat) system that transports large folded proteins containing a characteristic twin-arginine motif in their signal peptide across membranes. TatA could form the protein-conducting channel of the Tat system. The sequence is that of Sec-independent protein translocase protein TatA from Rickettsia akari (strain Hartford).